The following is a 256-amino-acid chain: Type III pantothenate kinase (256 aa).

An ATP-binding site is contributed by 6-13 (DVGNTNIV). Residue 107-110 (GADR) participates in substrate binding. The active-site Proton acceptor is Asp-109. Position 129 (Asp-129) interacts with K(+). Thr-132 provides a ligand contact to ATP. Thr-184 provides a ligand contact to substrate.

It belongs to the type III pantothenate kinase family. Homodimer. NH4(+) is required as a cofactor. K(+) serves as cofactor.

The protein resides in the cytoplasm. The catalysed reaction is (R)-pantothenate + ATP = (R)-4'-phosphopantothenate + ADP + H(+). It functions in the pathway cofactor biosynthesis; coenzyme A biosynthesis; CoA from (R)-pantothenate: step 1/5. Its function is as follows. Catalyzes the phosphorylation of pantothenate (Pan), the first step in CoA biosynthesis. The polypeptide is Type III pantothenate kinase (Pelotomaculum thermopropionicum (strain DSM 13744 / JCM 10971 / SI)).